Consider the following 201-residue polypeptide: Holliday junction branch migration complex subunit RuvA (201 aa).

The interval 1–63 is domain I; it reads MIAYIKGTLN…EDAQILFGFQ (63 aa). The interval 64 to 142 is domain II; that stretch reads NRDEKYLFTK…SVFSITDEQQ (79 aa). The flexible linker stretch occupies residues 143-149; the sequence is KSSVSNV. Residues 150–201 form a domain III region; that stretch reads NNNEVYSEAMEALKALGYTDKEVKQVLPHLKKDNDALSVDEAIRKALALLAK.

Belongs to the RuvA family. Homotetramer. Forms an RuvA(8)-RuvB(12)-Holliday junction (HJ) complex. HJ DNA is sandwiched between 2 RuvA tetramers; dsDNA enters through RuvA and exits via RuvB. An RuvB hexamer assembles on each DNA strand where it exits the tetramer. Each RuvB hexamer is contacted by two RuvA subunits (via domain III) on 2 adjacent RuvB subunits; this complex drives branch migration. In the full resolvosome a probable DNA-RuvA(4)-RuvB(12)-RuvC(2) complex forms which resolves the HJ.

The protein localises to the cytoplasm. The RuvA-RuvB-RuvC complex processes Holliday junction (HJ) DNA during genetic recombination and DNA repair, while the RuvA-RuvB complex plays an important role in the rescue of blocked DNA replication forks via replication fork reversal (RFR). RuvA specifically binds to HJ cruciform DNA, conferring on it an open structure. The RuvB hexamer acts as an ATP-dependent pump, pulling dsDNA into and through the RuvAB complex. HJ branch migration allows RuvC to scan DNA until it finds its consensus sequence, where it cleaves and resolves the cruciform DNA. The chain is Holliday junction branch migration complex subunit RuvA from Oceanobacillus iheyensis (strain DSM 14371 / CIP 107618 / JCM 11309 / KCTC 3954 / HTE831).